We begin with the raw amino-acid sequence, 49 residues long: Large ribosomal subunit protein bL33A (49 aa).

This sequence belongs to the bacterial ribosomal protein bL33 family.

This is Large ribosomal subunit protein bL33A from Staphylococcus aureus (strain Mu3 / ATCC 700698).